We begin with the raw amino-acid sequence, 461 residues long: Siroheme synthase (461 aa).

Residues 1 to 204 (MDYFPIFCQL…GDTTQAQQQV (204 aa)) form a precorrin-2 dehydrogenase /sirohydrochlorin ferrochelatase region. NAD(+) contacts are provided by residues 22 to 23 (EV) and 43 to 44 (GR). Ser128 is modified (phosphoserine). Positions 216 to 461 (GEVTLVGAGP…NWFRCEAASA (246 aa)) are uroporphyrinogen-III C-methyltransferase. Residue Pro225 coordinates S-adenosyl-L-methionine. Asp248 (proton acceptor) is an active-site residue. Catalysis depends on Lys270, which acts as the Proton donor. Residues 301–303 (GGD), Ile306, 331–332 (TA), Met382, and Gly411 each bind S-adenosyl-L-methionine.

It in the N-terminal section; belongs to the precorrin-2 dehydrogenase / sirohydrochlorin ferrochelatase family. The protein in the C-terminal section; belongs to the precorrin methyltransferase family.

The enzyme catalyses uroporphyrinogen III + 2 S-adenosyl-L-methionine = precorrin-2 + 2 S-adenosyl-L-homocysteine + H(+). It carries out the reaction precorrin-2 + NAD(+) = sirohydrochlorin + NADH + 2 H(+). It catalyses the reaction siroheme + 2 H(+) = sirohydrochlorin + Fe(2+). The protein operates within cofactor biosynthesis; adenosylcobalamin biosynthesis; precorrin-2 from uroporphyrinogen III: step 1/1. It functions in the pathway cofactor biosynthesis; adenosylcobalamin biosynthesis; sirohydrochlorin from precorrin-2: step 1/1. It participates in porphyrin-containing compound metabolism; siroheme biosynthesis; precorrin-2 from uroporphyrinogen III: step 1/1. Its pathway is porphyrin-containing compound metabolism; siroheme biosynthesis; siroheme from sirohydrochlorin: step 1/1. The protein operates within porphyrin-containing compound metabolism; siroheme biosynthesis; sirohydrochlorin from precorrin-2: step 1/1. Multifunctional enzyme that catalyzes the SAM-dependent methylations of uroporphyrinogen III at position C-2 and C-7 to form precorrin-2 via precorrin-1. Then it catalyzes the NAD-dependent ring dehydrogenation of precorrin-2 to yield sirohydrochlorin. Finally, it catalyzes the ferrochelation of sirohydrochlorin to yield siroheme. This Edwardsiella ictaluri (strain 93-146) protein is Siroheme synthase.